A 679-amino-acid chain; its full sequence is Mitotic interactor and substrate of PLK1 (679 aa).

A Phosphoserine; by CDK1; in vitro modification is found at serine 78. Disordered regions lie at residues 151–182 and 206–245; these read AVRK…TPLE and ANKG…GHVV. Residues 153 to 163 are compositionally biased toward polar residues; that stretch reads RKSSTVATLQG. At serine 156 the chain carries Phosphoserine. Phosphothreonine; by CDK1; in vitro occurs at positions 164 and 172. The residue at position 179 (threonine 179) is a Phosphothreonine. At serine 214 the chain carries Phosphoserine; by CDK1; in vitro. Threonine 219 is subject to Phosphothreonine. Threonine 224 bears the Phosphothreonine; by CDK1; in vitro mark. Serine 284 is modified (phosphoserine; by CDK1; in vitro). Threonine 287 bears the Phosphothreonine; by CDK1; in vitro mark. Phosphoserine is present on serine 348. Residues 360–371 are compositionally biased toward basic and acidic residues; that stretch reads QREEDHRREGLH. The interval 360–419 is disordered; the sequence is QREEDHRREGLHVGRASTPDWVSEGPQPGLRRALSSDSILSPAPDARAADPAPEVRKVNR. At threonine 377 the chain carries Phosphothreonine; by CDK1; in vitro. Serine 382 is modified (phosphoserine; by CDK1; in vitro). 3 positions are modified to phosphoserine; by PLK1; in vitro: serine 394, serine 395, and serine 397. Serine 400 is subject to Phosphoserine. Over residues 401–411 the composition is skewed to low complexity; the sequence is PAPDARAADPA. Phosphoserine is present on serine 430. A disordered region spans residues 447–494; it reads PSSLSTAEAKAATSPKATMSPRHLSESSGKPLSTKQEASKPPRGCPQA. Phosphoserine; by PLK1; in vitro is present on serine 471. The segment covering 472–482 has biased composition (polar residues); the sequence is ESSGKPLSTKQ. Phosphoserine occurs at positions 541 and 543. Positions 545–569 form a coiled coil; that stretch reads DLLERERESVLRREQEVAEERRNAL. Residues 557-567 show a composition bias toward basic and acidic residues; that stretch reads REQEVAEERRN. Disordered stretches follow at residues 557 to 598 and 622 to 643; these read REQE…ITGS and DPVD…GINP. Serine 575 is subject to Phosphoserine; by CDK1; in vitro. Threonine 577 is modified (phosphothreonine). Phosphoserine; by PLK1; in vitro is present on residues serine 582 and serine 586. A compositionally biased stretch (low complexity) spans 583–593; the sequence is DQNSRSSSQAS. Serine 675 bears the Phosphoserine mark.

This sequence belongs to the MISP family. In terms of assembly, associates with F-actin. Interacts with DCTN1; this interaction regulates DCTN1 distribution at the cell cortex. Interacts with PTK2/FAK and MAPRE1. In terms of processing, phosphorylated by CDK1 and PLK1. CDK1 is the priming kinase for PLK1 phosphorylation. Phosphorylation by PLK1 is required for proper spindle orientation at metaphase.

It is found in the cell junction. The protein localises to the focal adhesion. It localises to the cytoplasm. The protein resides in the cytoskeleton. Its subcellular location is the cell cortex. Functionally, plays a role in mitotic spindle orientation and mitotic progression. Regulates the distribution of dynactin at the cell cortex in a PLK1-dependent manner, thus stabilizing cortical and astral microtubule attachments required for proper mitotic spindle positioning. May link microtubules to the actin cytospkeleton and focal adhesions. May be required for directed cell migration and centrosome orientation. May also be necessary for proper stacking of the Golgi apparatus. This chain is Mitotic interactor and substrate of PLK1, found in Homo sapiens (Human).